A 675-amino-acid polypeptide reads, in one-letter code: DNA ligase (675 aa).

Residues 36–40 (DAAYD), 85–86 (SL), and Glu117 each bind NAD(+). Lys119 serves as the catalytic N6-AMP-lysine intermediate. The NAD(+) site is built by Arg140, Glu177, Lys294, and Lys318. Zn(2+) is bound by residues Cys412, Cys415, Cys430, and Cys436. One can recognise a BRCT domain in the interval 597-675 (AEDLPLSGNT…EAEFLELIGE (79 aa)).

This sequence belongs to the NAD-dependent DNA ligase family. LigA subfamily. Requires Mg(2+) as cofactor. Mn(2+) is required as a cofactor.

It catalyses the reaction NAD(+) + (deoxyribonucleotide)n-3'-hydroxyl + 5'-phospho-(deoxyribonucleotide)m = (deoxyribonucleotide)n+m + AMP + beta-nicotinamide D-nucleotide.. Its function is as follows. DNA ligase that catalyzes the formation of phosphodiester linkages between 5'-phosphoryl and 3'-hydroxyl groups in double-stranded DNA using NAD as a coenzyme and as the energy source for the reaction. It is essential for DNA replication and repair of damaged DNA. This Thioalkalivibrio sulfidiphilus (strain HL-EbGR7) protein is DNA ligase.